We begin with the raw amino-acid sequence, 257 residues long: UPF0246 protein Daro_2893 (257 aa).

It belongs to the UPF0246 family.

The sequence is that of UPF0246 protein Daro_2893 from Dechloromonas aromatica (strain RCB).